Here is a 133-residue protein sequence, read N- to C-terminus: Minor spike protein H (133 aa).

This sequence belongs to the microviridae H protein family.

Its subcellular location is the virion. Functionally, probably triggers with protein G the injection of the phage DNA into the host upon conformational changes induced by virus-host receptor interaction. This chain is Minor spike protein H, found in Spiroplasma virus 4 (SpV4).